The primary structure comprises 562 residues: Probable ganciclovir kinase (562 aa).

A compositionally biased stretch (polar residues) spans M1 to I16. The disordered stretch occupies residues M1–G32. Residues L201 to V209 and K218 contribute to the ATP site. D313 functions as the Proton acceptor in the catalytic mechanism.

This sequence belongs to the protein kinase superfamily. Tyr protein kinase family. HCMV ganciclovir subfamily.

Its function is as follows. Phosphorylates the antiviral nucleoside analog ganciclovir. The polypeptide is Probable ganciclovir kinase (U69) (Homo sapiens (Human)).